A 446-amino-acid polypeptide reads, in one-letter code: Calcium-binding and coiled-coil domain-containing protein 2 (446 aa).

The short motif at 133-136 (ILVV) is the CLIR element. Residues 137 to 349 (TTQGEVEEIE…RENSRLLSYM (213 aa)) are a coiled coil. The short motif at 203–206 (DYWE) is the LIR-like element. Residues 371 to 381 (NPGLVYGNPYS) form an interaction with LGALS8 region. The interval 395–446 (KKCPICKADDICDHILEQQQMQPLCLNCPICDKIFPATEKQIFEDHVFCHSL) is interaction with MYO6. The UBZ1-type zinc-finger motif lies at 419–444 (CLNCPICDKIFPATEKQIFEDHVFCH). Positions 422, 425, 440, and 444 each coordinate Zn(2+). Residue S445 is modified to Phosphoserine.

Belongs to the CALCOCO family. As to quaternary structure, dimer. Part of a complex consisting of CALCOCO2, TAX1BP1 and MYO6. Interacts with MYO6. Interacts with GEMIN4. Interacts with ATG8 family members MAP1LC3A, MAP1LC3B, GABARAP, GABARAPL1 and GABARAPL2. Interacts with ATG8 family member MAP1LC3C. Interacts with LGALS8. Interacts with TOM1; the interaction is indirect and is mediated by MYO6, which acts as a bridge between TOM1 and CALCOCO2. Interacts with AZI2.

It localises to the cytoplasm. Its subcellular location is the perinuclear region. It is found in the cytoskeleton. The protein localises to the cytoplasmic vesicle. The protein resides in the autophagosome membrane. Its function is as follows. Xenophagy-specific receptor required for autophagy-mediated intracellular bacteria degradation. Acts as an effector protein of galectin-sensed membrane damage that restricts the proliferation of infecting pathogens upon entry into the cytosol by targeting LGALS8-associated bacteria for autophagy. Initially orchestrates bacteria targeting to autophagosomes and subsequently ensures pathogen degradation by regulating pathogen-containing autophagosome maturation. Bacteria targeting to autophagosomes relies on its interaction with MAP1LC3A, MAP1LC3B and/or GABARAPL2, whereas regulation of pathogen-containing autophagosome maturation requires the interaction with MAP3LC3C. May play a role in ruffle formation and actin cytoskeleton organization and seems to negatively regulate constitutive secretion. This chain is Calcium-binding and coiled-coil domain-containing protein 2, found in Pongo abelii (Sumatran orangutan).